We begin with the raw amino-acid sequence, 351 residues long: sn-glycerol-3-phosphate import ATP-binding protein UgpC (351 aa).

In terms of domain architecture, ABC transporter spans 4 to 235; it reads IVLDNVRKSY…PASTFVATFI (232 aa). 37–44 provides a ligand contact to ATP; it reads GPSGCGKS.

The protein belongs to the ABC transporter superfamily. sn-glycerol-3-phosphate importer (TC 3.A.1.1.3) family. As to quaternary structure, the complex is composed of two ATP-binding proteins (UgpC), two transmembrane proteins (UgpA and UgpE) and a solute-binding protein (UgpB).

It localises to the cell inner membrane. It carries out the reaction sn-glycerol 3-phosphate(out) + ATP + H2O = sn-glycerol 3-phosphate(in) + ADP + phosphate + H(+). Functionally, part of the ABC transporter complex UgpBAEC involved in sn-glycerol-3-phosphate (G3P) import. Responsible for energy coupling to the transport system. The protein is sn-glycerol-3-phosphate import ATP-binding protein UgpC of Brucella abortus (strain 2308).